We begin with the raw amino-acid sequence, 289 residues long: DegV domain-containing protein YteA (289 aa).

Residues 3–284 (FQIMTDSTAD…DGTIAIFSIS (282 aa)) form the DegV domain. Threonine 62 and serine 94 together coordinate hexadecanoate.

May bind long-chain fatty acids, such as palmitate, and may play a role in lipid transport or fatty acid metabolism. The polypeptide is DegV domain-containing protein YteA (yteA) (Lactococcus lactis subsp. lactis (strain IL1403) (Streptococcus lactis)).